The sequence spans 395 residues: Elongation factor Tu (395 aa).

Residues 10 to 204 (KPHVNIGTIG…AVDSYIPTPE (195 aa)) enclose the tr-type G domain. The tract at residues 19-26 (GHVDHGKT) is G1. 19–26 (GHVDHGKT) is a binding site for GTP. A Mg(2+)-binding site is contributed by Thr-26. A G2 region spans residues 60–64 (GITIS). Positions 81–84 (DCPG) are G3. Residues 81–85 (DCPGH) and 136–139 (NKCD) contribute to the GTP site. The tract at residues 136 to 139 (NKCD) is G4. The interval 174–176 (SAL) is G5.

The protein belongs to the TRAFAC class translation factor GTPase superfamily. Classic translation factor GTPase family. EF-Tu/EF-1A subfamily. Monomer.

The protein resides in the cytoplasm. The enzyme catalyses GTP + H2O = GDP + phosphate + H(+). Functionally, GTP hydrolase that promotes the GTP-dependent binding of aminoacyl-tRNA to the A-site of ribosomes during protein biosynthesis. The chain is Elongation factor Tu from Listeria monocytogenes serotype 4b (strain CLIP80459).